A 470-amino-acid chain; its full sequence is Argininosuccinate lyase (470 aa).

It belongs to the lyase 1 family. Argininosuccinate lyase subfamily.

The protein localises to the cytoplasm. The catalysed reaction is 2-(N(omega)-L-arginino)succinate = fumarate + L-arginine. Its pathway is amino-acid biosynthesis; L-arginine biosynthesis; L-arginine from L-ornithine and carbamoyl phosphate: step 3/3. The chain is Argininosuccinate lyase from Synechococcus sp. (strain WH7803).